Consider the following 289-residue polypeptide: 4-hydroxy-3-methylbut-2-enyl diphosphate reductase (289 aa).

Position 13 (C13) interacts with [4Fe-4S] cluster. H42 and H76 together coordinate (2E)-4-hydroxy-3-methylbut-2-enyl diphosphate. 2 residues coordinate dimethylallyl diphosphate: H42 and H76. 2 residues coordinate isopentenyl diphosphate: H42 and H76. Position 98 (C98) interacts with [4Fe-4S] cluster. Position 130 (H130) interacts with (2E)-4-hydroxy-3-methylbut-2-enyl diphosphate. H130 provides a ligand contact to dimethylallyl diphosphate. H130 lines the isopentenyl diphosphate pocket. E132 functions as the Proton donor in the catalytic mechanism. T168 contacts (2E)-4-hydroxy-3-methylbut-2-enyl diphosphate. C199 is a binding site for [4Fe-4S] cluster. The (2E)-4-hydroxy-3-methylbut-2-enyl diphosphate site is built by S227, S228, N229, and S272. S227, S228, N229, and S272 together coordinate dimethylallyl diphosphate. 4 residues coordinate isopentenyl diphosphate: S227, S228, N229, and S272.

This sequence belongs to the IspH family. [4Fe-4S] cluster is required as a cofactor.

It catalyses the reaction isopentenyl diphosphate + 2 oxidized [2Fe-2S]-[ferredoxin] + H2O = (2E)-4-hydroxy-3-methylbut-2-enyl diphosphate + 2 reduced [2Fe-2S]-[ferredoxin] + 2 H(+). It carries out the reaction dimethylallyl diphosphate + 2 oxidized [2Fe-2S]-[ferredoxin] + H2O = (2E)-4-hydroxy-3-methylbut-2-enyl diphosphate + 2 reduced [2Fe-2S]-[ferredoxin] + 2 H(+). It functions in the pathway isoprenoid biosynthesis; dimethylallyl diphosphate biosynthesis; dimethylallyl diphosphate from (2E)-4-hydroxy-3-methylbutenyl diphosphate: step 1/1. The protein operates within isoprenoid biosynthesis; isopentenyl diphosphate biosynthesis via DXP pathway; isopentenyl diphosphate from 1-deoxy-D-xylulose 5-phosphate: step 6/6. Its function is as follows. Catalyzes the conversion of 1-hydroxy-2-methyl-2-(E)-butenyl 4-diphosphate (HMBPP) into a mixture of isopentenyl diphosphate (IPP) and dimethylallyl diphosphate (DMAPP). Acts in the terminal step of the DOXP/MEP pathway for isoprenoid precursor biosynthesis. The polypeptide is 4-hydroxy-3-methylbut-2-enyl diphosphate reductase (Porphyromonas gingivalis (strain ATCC BAA-308 / W83)).